The sequence spans 118 residues: Fluoride-specific ion channel FluC 2 (118 aa).

4 helical membrane passes run 1–21, 33–53, 55–75, and 93–113; these read MIEA…RFAI, FPIA…YIIG, GVTT…FTTF, and TFLL…FLGM. Gly-70 and Thr-73 together coordinate Na(+).

It belongs to the fluoride channel Fluc/FEX (TC 1.A.43) family.

Its subcellular location is the cell membrane. The enzyme catalyses fluoride(in) = fluoride(out). With respect to regulation, na(+) is not transported, but it plays an essential structural role and its presence is essential for fluoride channel function. Functionally, fluoride-specific ion channel. Important for reducing fluoride concentration in the cell, thus reducing its toxicity. In Bacillus thuringiensis subsp. konkukian (strain 97-27), this protein is Fluoride-specific ion channel FluC 2.